Here is a 151-residue protein sequence, read N- to C-terminus: MKKTTRTMAAHKHVALVAHDNCKGELLRWVTENKEKLQRHFLYATGTTGHMLSKETGLAIKSMISGPMGGDQQLGALISEGKIDVLIFFWDPLNAVPHDPDVKALLRIASVWNIPVATNRASAKFLFSSSLMEQEVQIEIPDYQAYLAERT.

The MGS-like domain occupies 1 to 151 (MKKTTRTMAA…DYQAYLAERT (151 aa)). Substrate is bound by residues H19, K23, 45–48 (TGTT), and 65–66 (SG). D71 functions as the Proton donor/acceptor in the catalytic mechanism. H98 contacts substrate.

It belongs to the methylglyoxal synthase family.

It carries out the reaction dihydroxyacetone phosphate = methylglyoxal + phosphate. Catalyzes the formation of methylglyoxal from dihydroxyacetone phosphate. The sequence is that of Methylglyoxal synthase from Vibrio cholerae serotype O1 (strain ATCC 39541 / Classical Ogawa 395 / O395).